Consider the following 101-residue polypeptide: Protein RnfH (101 aa).

It belongs to the UPF0125 (RnfH) family.

In Coxiella burnetii (strain RSA 331 / Henzerling II), this protein is Protein RnfH.